A 94-amino-acid chain; its full sequence is Acylphosphatase (94 aa).

Residues 8-94 (RFTARVVGRV…QGDLADFRRK (87 aa)) enclose the Acylphosphatase-like domain. Active-site residues include Arg-23 and Asn-41.

It belongs to the acylphosphatase family.

It carries out the reaction an acyl phosphate + H2O = a carboxylate + phosphate + H(+). The chain is Acylphosphatase (acyP) from Frankia alni (strain DSM 45986 / CECT 9034 / ACN14a).